Reading from the N-terminus, the 308-residue chain is Transcription initiation factor TFIID subunit 8 (308 aa).

Residues 1–29 (MADTAAGPGGSGTRPGSKQSTNPADNYHL) are disordered. The residue at position 2 (Ala-2) is an N-acetylalanine. Residues 14–24 (RPGSKQSTNPA) are compositionally biased toward polar residues. The Histone-fold domain occupies 35–102 (LQVVVSSLLT…VTLVEMGFNV (68 aa)). Thr-128 carries the phosphothreonine modification. The span at 235 to 248 (MEETDSSEQEEQTD) shows a compositional bias: acidic residues. Positions 235–308 (MEETDSSEQE…PKIRRKKSLS (74 aa)) are disordered. Positions 268 to 281 (ASVLQQSSSLSGSR) are enriched in low complexity. Phosphoserine is present on Ser-269. The Nuclear localization signal motif lies at 292–305 (YLRPVKKPKIRRKK). The segment covering 295–308 (PVKKPKIRRKKSLS) has biased composition (basic residues).

It belongs to the TAF8 family. As to quaternary structure, component of the TFIID basal transcription factor complex, composed of TATA-box-binding protein TBP, and a number of TBP-associated factors (TAFs), including TAF1, TAF2, TAF3, TAF4, TAF5, TAF6, TAF7, TAF8, TAF9, TAF10, TAF11, TAF12 and TAF13. Interacts with TBP, TAF1, TAF6, TAF10, TAF11 and TAF13. Component also of a small TAF complex (SMAT) containing TAF8, TAF10 and SUPT7L. Forms a heterodimer with TAF10. Interaction with TAF10 is mediated mainly via its histone fold domain while interaction with SUPT7L is via its C-terminal region. Low level of expression throughout the brain with slightly higher expression in the hippocampus.

It is found in the nucleus. Its subcellular location is the cytoplasm. Functionally, the TFIID basal transcription factor complex plays a major role in the initiation of RNA polymerase II (Pol II)-dependent transcription. TFIID recognizes and binds promoters with or without a TATA box via its subunit TBP, a TATA-box-binding protein, and promotes assembly of the pre-initiation complex (PIC). The TFIID complex consists of TBP and TBP-associated factors (TAFs), including TAF1, TAF2, TAF3, TAF4, TAF5, TAF6, TAF7, TAF8, TAF9, TAF10, TAF11, TAF12 and TAF13. The TFIID complex structure can be divided into 3 modules TFIID-A, TFIID-B, and TFIID-C. TAF8 is involved in forming the TFIID-B module, together with TAF5. Mediates both basal and activator-dependent transcription. Plays a role in the differentiation of preadipocyte fibroblasts to adipocytes, however, does not seem to play a role in differentiation of myoblasts. Required for the integration of TAF10 in the TAF complex. May be important for survival of cells of the inner cell mass which constitute the pluripotent cell population of the early embryo. The protein is Transcription initiation factor TFIID subunit 8 (Taf8) of Mus musculus (Mouse).